Consider the following 345-residue polypeptide: Polyprenyl transferase dpmpC (345 aa).

A run of 8 helical transmembrane segments spans residues 24 to 44 (PVFA…ARLA), 60 to 80 (GLCF…NDWV), 101 to 121 (VTTF…WYLL), 183 to 203 (LYVY…VIGW), 220 to 240 (CLPL…AYSY), 261 to 281 (HLHL…LLFL), 286 to 306 (SFWL…EQLI), and 319 to 339 (LHKS…VELL).

The protein belongs to the UbiA prenyltransferase family. It depends on Mg(2+) as a cofactor.

It localises to the membrane. It functions in the pathway secondary metabolite biosynthesis; terpenoid biosynthesis. Polyprenyl transferase; part of the gene cluster that mediates the biosynthesis of diterpenoid pyrones. The first step of the pathway is the synthesis of the alpha-pyrone moiety by the polyketide synthase dpmpA via condensation of one acetyl-CoA starter unit with 3 malonyl-CoA units and 2 methylations. The alpha-pyrone is then combined with geranylgeranyl pyrophosphate (GGPP) formed by the GGPP synthase dpmpD through the action of the prenyltransferase dpmpC to yield a linear alpha-pyrone diterpenoid. Subsequent steps in the diterpenoid pyrone biosynthetic pathway involve the decalin core formation, which is initiated by the epoxidation of the C10-C11 olefin by the FAD-dependent oxidoreductase dpmpE, and is followed by a cyclization cascade catalyzed by the terpene cyclase dpmpB. The short chain dehydrogenase/reductase dpmpG then oxidizes the 8S hydroxy group to a ketone and the short chain dehydrogenase/reductase dpmpH reduces the ketone to the 8R hydroxy group to yield higginsianin B. Higginsianin B is further methylated by the methyltransferase dpmpI to produce the intermediate named FDDP B. The cytochrome P450 monooxygenase dpmpJ then oxidizes the C-26 methyl to primary alcohol, producing the final diterpenoid pyrone with a C-26 primary alcohol on the gamma-pyrone moiety named FDDP C. This chain is Polyprenyl transferase dpmpC, found in Macrophomina phaseolina (strain MS6) (Charcoal rot fungus).